The following is a 174-amino-acid chain: WAP four-disulfide core domain protein 2 (174 aa).

Positions 1 to 25 (MPACRLCLLAAGLLLGLLLFTPISA) are cleaved as a signal peptide. Residues 29-74 (DAEKPGECPQLEPITDCVLECTLDKDCADNRKCCQAGCSSVCSKPN) enclose the WAP 1 domain. 4 disulfide bridges follow: Cys-36–Cys-62, Cys-45–Cys-66, Cys-49–Cys-61, and Cys-55–Cys-70. Residues 68-117 (SVCSKPNGPSEGELSGTDTKLSETGTTTQSAGLDHTTKPPGGQVSTKPPA) form a disordered region. Positions 83 to 98 (GTDTKLSETGTTTQSA) are enriched in polar residues. The 49-residue stretch at 125-173 (VREKQGTCPSVDIPKLGLCEDQCQVDSQCSGNMKCCRNGCGKMACTTPK) folds into the WAP 2 domain. Intrachain disulfides connect Cys-132–Cys-160, Cys-143–Cys-164, Cys-147–Cys-159, and Cys-153–Cys-169.

As to quaternary structure, homotrimer; disulfide-linked.

The protein resides in the secreted. Broad range protease inhibitor. This is WAP four-disulfide core domain protein 2 (Wfdc2) from Mus musculus (Mouse).